Here is a 194-residue protein sequence, read N- to C-terminus: Peptidyl-tRNA hydrolase (194 aa).

Tyrosine 17 contacts tRNA. Residue histidine 22 is the Proton acceptor of the active site. 3 residues coordinate tRNA: tyrosine 68, asparagine 70, and asparagine 115.

It belongs to the PTH family. As to quaternary structure, monomer.

It is found in the cytoplasm. It carries out the reaction an N-acyl-L-alpha-aminoacyl-tRNA + H2O = an N-acyl-L-amino acid + a tRNA + H(+). Hydrolyzes ribosome-free peptidyl-tRNAs (with 1 or more amino acids incorporated), which drop off the ribosome during protein synthesis, or as a result of ribosome stalling. In terms of biological role, catalyzes the release of premature peptidyl moieties from peptidyl-tRNA molecules trapped in stalled 50S ribosomal subunits, and thus maintains levels of free tRNAs and 50S ribosomes. The chain is Peptidyl-tRNA hydrolase from Pseudoalteromonas atlantica (strain T6c / ATCC BAA-1087).